The primary structure comprises 346 residues: UDP-N-acetylenolpyruvoylglucosamine reductase (346 aa).

The region spanning 17 to 187 (IESQAYALIE…VAVGFTLKKE (171 aa)) is the FAD-binding PCMH-type domain. Arg163 is a catalytic residue. Catalysis depends on Ser233, which acts as the Proton donor. Glu329 is an active-site residue.

This sequence belongs to the MurB family. FAD is required as a cofactor.

It is found in the cytoplasm. It carries out the reaction UDP-N-acetyl-alpha-D-muramate + NADP(+) = UDP-N-acetyl-3-O-(1-carboxyvinyl)-alpha-D-glucosamine + NADPH + H(+). Its pathway is cell wall biogenesis; peptidoglycan biosynthesis. In terms of biological role, cell wall formation. This Photobacterium profundum (strain SS9) protein is UDP-N-acetylenolpyruvoylglucosamine reductase.